Here is a 241-residue protein sequence, read N- to C-terminus: Carboxy-S-adenosyl-L-methionine synthase (241 aa).

S-adenosyl-L-methionine contacts are provided by residues Y38, 63 to 65, 88 to 89, 116 to 117, N131, and R198; these read GCS, DN, and DI.

Belongs to the class I-like SAM-binding methyltransferase superfamily. Cx-SAM synthase family. In terms of assembly, homodimer.

It carries out the reaction prephenate + S-adenosyl-L-methionine = carboxy-S-adenosyl-L-methionine + 3-phenylpyruvate + H2O. Functionally, catalyzes the conversion of S-adenosyl-L-methionine (SAM) to carboxy-S-adenosyl-L-methionine (Cx-SAM). This is Carboxy-S-adenosyl-L-methionine synthase from Pasteurella multocida (strain Pm70).